Consider the following 374-residue polypeptide: Large ribosomal subunit protein uL4 (374 aa).

Positions 336–355 (EKAMAKGMQNKKNREARHAA) are disordered.

The protein belongs to the universal ribosomal protein uL4 family.

The chain is Large ribosomal subunit protein uL4 (RPL4) from Trypanosoma brucei brucei.